We begin with the raw amino-acid sequence, 200 residues long: uncharacterized protein (200 aa).

Disordered stretches follow at residues 1 to 27 (MTDT…EAET), 42 to 79 (IPKE…STNA), and 169 to 200 (HGRA…EHGR). Residues 187–200 (RQMEKTGAGREHGR) show a composition bias toward basic and acidic residues.

This is an uncharacterized protein from Shigella flexneri.